We begin with the raw amino-acid sequence, 697 residues long: MARKTPIERYRNIGISAHIDAGKTTTSERILFYTGVTHKLGEVHDGAATTDWMEQEQERGITITSSAVTCFWKGMDLSRPEHRINIIDTPGHVDFTIEVERSMRVLDGACMVYCAVGGVQPQSETVWRQANKHKVPRLAFVNKMDRTGANFFKVVEQMKLRLQANPVPVVIPIGAEDNFAGVVDLIKMKAIYWDDASQGMKFEYKDIPADLLDTANEWREKMVESAAEASEELMNKYLESGELSEAEIIAGLRQRTIATEIQPMLCGSAFKNKGVQRMLDAVLDFLPSPVDIPDVVGESESGEPLTRKADDNEHFSALAFKLMSDPFVGQLTFVRVYSGVLTKGETVYNSTSGRKERIGRIVQMSANERNEIEEIRAGDIAACIGLKEVTTGETLCSIDHPIILERMVFPEPVISVAIEPKTKSDQEKMGLALSRLAQEDPSFRVRTDEETNQTIISGMGELHLEIIVDRMKREFNVEANVGAPQVAYREAIKKPVEVEGKFVKQSGGKGQYGHVWIKMEPNEPGKGYEFIDQIKGGTVPREFIPAVDKGLRETIPSGVLAGFPVVDVKVTLFDGSYHDVDSNENAFKMAASMAFKDGMRKADPVLLEPIMAVEVETPEDYMGDVMGDLSSRRGVIQGMDDLVGGGKAIRAEVPLSEMFGYATTVRSLTQGRATYSMEFKHYAEAPRNVAEAIINKK.

The region spanning 8–290 (ERYRNIGISA…AVLDFLPSPV (283 aa)) is the tr-type G domain. Residues 17–24 (AHIDAGKT), 88–92 (DTPGH), and 142–145 (NKMD) each bind GTP.

It belongs to the TRAFAC class translation factor GTPase superfamily. Classic translation factor GTPase family. EF-G/EF-2 subfamily.

Its subcellular location is the cytoplasm. In terms of biological role, catalyzes the GTP-dependent ribosomal translocation step during translation elongation. During this step, the ribosome changes from the pre-translocational (PRE) to the post-translocational (POST) state as the newly formed A-site-bound peptidyl-tRNA and P-site-bound deacylated tRNA move to the P and E sites, respectively. Catalyzes the coordinated movement of the two tRNA molecules, the mRNA and conformational changes in the ribosome. The sequence is that of Elongation factor G from Methylobacillus flagellatus (strain ATCC 51484 / DSM 6875 / VKM B-1610 / KT).